The chain runs to 159 residues: Neuroglobin-2 (159 aa).

The region spanning 3 to 151 (KLTEKDKELI…VVAAMSRGWA (149 aa)) is the Globin domain. The heme b site is built by His-66 and His-98.

Belongs to the globin family. As to quaternary structure, monomer. Homodimers and homotetramers. Mainly monomeric but also detected as part of homodimers and homotetramers.

The protein resides in the cytoplasm. It localises to the cytosol. It is found in the mitochondrion matrix. The catalysed reaction is Fe(III)-heme b-[protein] + nitric oxide + H2O = Fe(II)-heme b-[protein] + nitrite + 2 H(+). Its function is as follows. Monomeric globin with a bis-histidyl six-coordinate heme-iron atom through which it can bind dioxygen, carbon monoxide and nitric oxide. Could help transport oxygen and increase its availability to the metabolically active neuronal tissues, though its low quantity in tissues as well as its high affinity for dioxygen, which may limit its oxygen-releasing ability, argue against it. The ferrous/deoxygenated form exhibits a nitrite reductase activity and it could produce nitric oxide which in turn inhibits cellular respiration in response to hypoxia. In its ferrous/deoxygenated state, it may also exhibit GDI (Guanine nucleotide Dissociation Inhibitor) activity toward heterotrimeric G-alpha proteins, thereby regulating signal transduction to facilitate neuroprotective responses in the wake of hypoxia and associated oxidative stress. This Oncorhynchus mykiss (Rainbow trout) protein is Neuroglobin-2 (ngb2).